The chain runs to 230 residues: Large ribosomal subunit protein uL4 (230 aa).

Residues 51 to 105 (RAAARQGTHSTKTRGDVSGGGRKPYRQKGTGRARQGSMRAPQFTGGGIVHGPKLR) are disordered.

Belongs to the universal ribosomal protein uL4 family. As to quaternary structure, part of the 50S ribosomal subunit.

Functionally, one of the primary rRNA binding proteins, this protein initially binds near the 5'-end of the 23S rRNA. It is important during the early stages of 50S assembly. It makes multiple contacts with different domains of the 23S rRNA in the assembled 50S subunit and ribosome. Forms part of the polypeptide exit tunnel. The polypeptide is Large ribosomal subunit protein uL4 (Mycobacterium leprae (strain Br4923)).